Consider the following 149-residue polypeptide: Calmodulin (149 aa).

An N-acetylalanine modification is found at Ala2. EF-hand domains lie at 8 to 43 (EQIA…LGQN), 44 to 79 (PTEA…KMKE), 81 to 116 (DSEE…LGEK), and 117 to 149 (LTDD…MVSK). Lys14 is subject to N6,N6-dimethyllysine. Asp21, Asp23, Asp25, Thr27, Glu32, Asp57, Asp59, Asn61, Thr63, Glu68, Asp94, Asp96, Asn98, and Glu105 together coordinate Ca(2+). Lys116 bears the N6,N6,N6-trimethyllysine mark. Ca(2+) contacts are provided by Asp130, Asp132, Asp134, His136, and Glu141.

This sequence belongs to the calmodulin family. In terms of processing, the pantophobiac mutant CAM2 is undermethylated on Lys-116.

Functionally, calmodulin mediates the control of a large number of enzymes, ion channels and other proteins by Ca(2+). Among the enzymes to be stimulated by the calmodulin-Ca(2+) complex are a number of protein kinases and phosphatases. This is Calmodulin (CAM) from Paramecium tetraurelia.